Here is a 98-residue protein sequence, read N- to C-terminus: MMLIECPNCGPRNETEFSYGGQAHVAYPEDPNALSDKEWSRYLFYRENSKGIFAERWVHSGGCRKWFNALRDTATYEFKAVYRAGEPRPELNTQGGSR.

Zn(2+)-binding residues include cysteine 6, cysteine 9, histidine 59, and cysteine 63.

The protein belongs to the SoxD family. As to quaternary structure, heterotetramer composed of subunits alpha (SoxA), beta (SoxB), gamma (SoxG) and delta (SoxD).

It localises to the cytoplasm. It catalyses the reaction sarcosine + (6S)-5,6,7,8-tetrahydrofolate + O2 = (6R)-5,10-methylene-5,6,7,8-tetrahydrofolate + glycine + H2O2. It carries out the reaction sarcosine + O2 + H2O = formaldehyde + glycine + H2O2. Its function is as follows. In the presence of tetrahydrofolate, catalyzes the oxidative demethylation of sarcosine to yield glycine, 5,10-methylenetetrahydrofolate and hydrogen peroxide. In the absence of tetrahydrofolate, catalyzes the oxidative demethylation of sarcosine to yield glycine, formaldehyde and hydrogen peroxide. In Corynebacterium sp. (strain P-1), this protein is Sarcosine oxidase subunit delta.